Consider the following 259-residue polypeptide: Type III pantothenate kinase (259 aa).

6 to 13 (DAGNTNIV) lines the ATP pocket. Substrate contacts are provided by residues Tyr-100 and 107 to 110 (GADR). Asp-109 acts as the Proton acceptor in catalysis. Position 129 (Asp-129) interacts with K(+). Thr-132 serves as a coordination point for ATP. Residue Thr-184 participates in substrate binding.

This sequence belongs to the type III pantothenate kinase family. Homodimer. NH4(+) serves as cofactor. K(+) is required as a cofactor.

The protein resides in the cytoplasm. The catalysed reaction is (R)-pantothenate + ATP = (R)-4'-phosphopantothenate + ADP + H(+). It participates in cofactor biosynthesis; coenzyme A biosynthesis; CoA from (R)-pantothenate: step 1/5. Functionally, catalyzes the phosphorylation of pantothenate (Pan), the first step in CoA biosynthesis. This chain is Type III pantothenate kinase, found in Clostridium novyi (strain NT).